A 137-amino-acid polypeptide reads, in one-letter code: Small ribosomal subunit protein uS9 (137 aa).

Positions 103-137 are disordered; it reads PPLKAEGYLTRDPRAKERKKYGLHKARKAPQYSKR. Residues 118–137 show a composition bias toward basic residues; the sequence is KERKKYGLHKARKAPQYSKR.

It belongs to the universal ribosomal protein uS9 family.

The polypeptide is Small ribosomal subunit protein uS9 (Crocosphaera subtropica (strain ATCC 51142 / BH68) (Cyanothece sp. (strain ATCC 51142))).